The following is a 487-amino-acid chain: WD-40 repeat-containing protein MSI5 (487 aa).

M1 carries the N-acetylmethionine modification. Residues 1-12 (MESEAAATVQAT) show a composition bias toward low complexity. Residues 1 to 44 (MESEAAATVQATRPRRAPRTPVTAILTDKRRRKPKSNNESQLPF) are disordered. The short motif at 14 to 21 (PRRAPRTP) is the Nuclear localization signal element. 6 WD repeats span residues 142–182 (IHPG…DRYA), 197–237 (GHQD…TMAG), 270–310 (GHKD…SPAM), 315–355 (AHDA…SNGV), 364–404 (GHRA…KKSE), and 419–466 (GHRD…YRPE). A disordered region spans residues 236 to 268 (AGSDSKSPGSSFKQTGEGSDKTGGPSVGPRGIY). Positions 237-252 (GSDSKSPGSSFKQTGE) are enriched in polar residues. Residues 288–303 (FCSVGDDSCLMLWDAR) carry the DWD box motif.

Belongs to the WD repeat RBAP46/RBAP48/MSI1 family. In terms of assembly, interacts with AHL16. Interacts with LHP1, PDP2, PDP3 and PDP6. Component of the PRC2 (polycomb repressive complex 2) complex which regulates histone methylation on histone H3K27.

It is found in the nucleus. In terms of biological role, core histone-binding subunit that may target chromatin assembly factors, chromatin remodeling factors and histone deacetylases to their histone substrates in a manner that is regulated by nucleosomal DNA. Acts together with PDP1 and MSI4/FVE to regulate the function of the PRC2 complex on FLC. This Arabidopsis thaliana (Mouse-ear cress) protein is WD-40 repeat-containing protein MSI5.